Reading from the N-terminus, the 1401-residue chain is Alpha-latrotoxin-Lt1a (1401 aa).

An N-terminal signal peptide occupies residues 1-20 (MISVGEIMERANHSLVRMRR). Positions 17 to 20 (RMRR) are furin-like endopeptidase recognition region. The tract at residues 238–257 (VLYALLYGTQTYVSVMFFLL) is helix H8 is the probable transmembrane region of the tetrameric pore inserted in the target cell membrane. A disulfide bond links Cys-413 and Cys-1066. ANK repeat units follow at residues 458-489 (LYNAASNPDSAVGFKEFTKLNYDGANIRATFD), 490-521 (HGRTVFHAAAKSGNDKIMFGLTFLAKSTELNQ), 525-554 (KGYTPIHVAADSGNAGIVNLLIQRGVSINS), 559-589 (FLQTPLHLAAQRGFVTTFQRLMESPEININE), 593-622 (DGFTPLHYAIRGGERILEAFLNQISIDVNA), 626-656 (TGLTPFHLAIIKNDWPVASTLLGSKKVDINA), 660-690 (NNITALHYAAILGYLETTKQLINLKEINANV), 695-723 (GLLSALHYAILYKHDDVASFLMRSSNVNV), 729-758 (GGITPLHLAVIQGRKQILSLMFDIGVNIEQ), 762-791 (EKYTPLHLAAMSKYPELIQILLDQGSNFEA), 795-824 (SGATPLHLATFKGKSQAALILLNNEVNWRD), 828-857 (NGQMPIHGAAMTGLLDVAQAIISIDATVVD), 862-891 (NSDTPLNLAAQNSHIDVIKYFIDQGADINT), 895-924 (KGLAPLLAFSKKGNLDMVKYLFDKNANVYI), 928-957 (DGMNFFYYAVQNGHLNIVKYAMSEKDKFEW), 971-1003 (EECAISHFAVCDAVQFDRIEIVKYFVGTLGNFA), 1004-1033 (ICGPLHQAARYGHLDIVKYLVEEEFLSVDG), 1035-1064 (KTDTPLCYASENGHFTVVQYLVSNGAKVNH), 1068-1097 (NGMTAIDKAITKNHLQVVQFLAANGVDFRR), 1101-1131 (RGTTPFLTAVAENALHIAEYLIREKRQDINI), 1137-1166 (DKDTALHLAVYYKNLQMIKLLIKYGIDVTI), and 1170-1199 (YDKTALDIAIDAKFSNIVEYLKTKSGKFRR). Residues 1026–1032 (EEFLSVD) form a 4C4.1 epitope region. The interval 1196–1199 (KFRR) is furin-like endopeptidase recognition region. Residues 1200 to 1401 (EYKSSYGERS…SDGILTKKLM (202 aa)) constitute a propeptide that is removed on maturation.

It belongs to the cationic peptide 01 (latrotoxin) family. 03 (alpha-latrotoxin) subfamily. As to quaternary structure, homotetramer in membranes. Post-translationally, processed by furin-like proteases at both the N- and C-termini. In terms of tissue distribution, expressed in venom gland, cephalothorax, and abdomen tissues from both males and females.

It is found in the secreted. Its subcellular location is the target cell membrane. Functionally, presynaptic neurotoxin that causes massive release of neurotransmitters from vertebrate (but not invertebrate) nerve terminals and endocrine cells via a complex mechanism involving activation of receptor(s) and toxin insertion into the plasma membrane with subsequent pore formation. Binds to neurexin-1-alpha (NRXN1) in a calcium dependent manner, adhesion G protein-coupled receptor L1 (ADGRL1, also termed latrophilin-1 and calcium-independent receptor of latrotoxin (CIRL)), and receptor-type tyrosine-protein phosphatase S (PTPRS), also termed PTP sigma. NRXN1 and PTPRS are suggested to provide a platform for binding and subsequent pore formation events. In contrast, binding to ADGRL1 does not involve oligomerization and channel formation, but direct downstream stimulation of the synaptic fusion machinery. This is Alpha-latrotoxin-Lt1a from Latrodectus tredecimguttatus (Mediterranean black widow spider).